Here is a 318-residue protein sequence, read N- to C-terminus: Na(+)-translocating ferredoxin:NAD(+) oxidoreductase complex subunit D (318 aa).

Transmembrane regions (helical) follow at residues 35–55 (LAVA…ICVI), 77–99 (WSAV…WWIG), and 114–134 (FGGL…FLLA). Thr156 is modified (FMN phosphoryl threonine). 3 helical membrane passes run 182 to 202 (VYGC…LYLI), 206 to 226 (IISW…ALLV), and 261 to 281 (IIYA…GGYP).

The protein belongs to the NqrB/RnfD family. In terms of assembly, the complex is composed of six subunits: RnfA, RnfB, RnfC, RnfD, RnfE and RnfG. FMN serves as cofactor.

It is found in the cell membrane. It catalyses the reaction 2 reduced [2Fe-2S]-[ferredoxin] + Na(+)(in) + NAD(+) + H(+) = 2 oxidized [2Fe-2S]-[ferredoxin] + Na(+)(out) + NADH. Part of a membrane-bound complex that couples electron transfer with translocation of ions across the membrane. Couples electron transfer from reduced ferredoxin to NAD(+) with electrogenic movement of Na(+) out of the cell. Involved in caffeate respiration. This is Na(+)-translocating ferredoxin:NAD(+) oxidoreductase complex subunit D from Acetobacterium woodii (strain ATCC 29683 / DSM 1030 / JCM 2381 / KCTC 1655 / WB1).